The sequence spans 66 residues: Brevinin-1CDYd (66 aa).

An N-terminal signal peptide occupies residues 1-22 (MFTLKKSLLILFFLGTINFSLC). A propeptide spanning residues 23–44 (EEERNAEEERRDDPEERDVEVE) is cleaved from the precursor. An intrachain disulfide couples C60 to C66.

Belongs to the frog skin active peptide (FSAP) family. Brevinin subfamily. As to expression, expressed by the skin glands.

The protein resides in the secreted. Antimicrobial peptide. The protein is Brevinin-1CDYd of Rana dybowskii (Dybovsky's frog).